Here is an 84-residue protein sequence, read N- to C-terminus: uncharacterized protein (84 aa).

Basic residues-rich tracts occupy residues 1 to 15 and 67 to 84; these read MPPHGHHHHGHHGHH and HHGHHGHHGHHGHHGHFF. Disordered regions lie at residues 1–22 and 64–84; these read MPPHGHHHHGHHGHHEHVTYTT and TSHHHGHHGHHGHHGHHGHFF.

This is an uncharacterized protein from Dictyostelium discoideum (Social amoeba).